Consider the following 288-residue polypeptide: Protein-S-isoprenylcysteine O-methyltransferase (288 aa).

The helical transmembrane segment at 13 to 29 threads the bilayer; sequence SIVSFTLGASVISLPLL. The Lumenal segment spans residues 30–45; sequence TSSFTEQTLLAAAPGR. Residues 46–63 traverse the membrane as a helical segment; the sequence is IALVFFIAALNGLLLLLY. At 64 to 73 the chain is on the cytoplasmic side; the sequence is KAQLYQVAIR. The helical transmembrane segment at 74–91 threads the bilayer; the sequence is ASFLGFAFGCGLLLSITQ. Over 92 to 96 the chain is Lumenal; it reads SPWKP. Residues 97-116 traverse the membrane as a helical segment; the sequence is FGWYVCSLSFFHYSEYLVTA. The Cytoplasmic segment spans residues 117–135; it reads MNNPRSLSIDSFLLNHSLE. The chain crosses the membrane as a helical span at residues 136-153; that stretch reads YTLAALSSWVEFTIETTI. The Lumenal segment spans residues 154–158; the sequence is YPDLK. Residues 159–178 form a helical membrane-spanning segment; the sequence is QITWLSVIGLIMVLFGEVLR. Over 179-216 the chain is Cytoplasmic; the sequence is KCAMLTAGSNFNHIVQNEKSDSHTLVTSGVYSWFRHPS. Residues Gln-194, 201–204, Tyr-209, and 214–217 contribute to the S-adenosyl-L-methionine site; these read HTLV and HPSY. The chain crosses the membrane as a helical span at residues 217 to 232; it reads YVGWFYWSIGTQVLLC. A topological domain (lumenal) is located at residue Asn-233. A helical transmembrane segment spans residues 234 to 248; that stretch reads PLCLVGYTLASWRFF. Residues 249 to 288 are Cytoplasmic-facing; the sequence is SERIEEEEFSLIHFFGENYLEYKKKVPTGLPFIKGVKMEP. A substrate-binding site is contributed by Arg-251. Glu-255 serves as a coordination point for S-adenosyl-L-methionine.

Belongs to the class VI-like SAM-binding methyltransferase superfamily. Isoprenylcysteine carboxyl methyltransferase family.

The protein resides in the endoplasmic reticulum membrane. It catalyses the reaction [protein]-C-terminal S-[(2E,6E)-farnesyl]-L-cysteine + S-adenosyl-L-methionine = [protein]-C-terminal S-[(2E,6E)-farnesyl]-L-cysteine methyl ester + S-adenosyl-L-homocysteine. Catalyzes the post-translational methylation of isoprenylated C-terminal cysteine residues. The polypeptide is Protein-S-isoprenylcysteine O-methyltransferase (icmt) (Xenopus laevis (African clawed frog)).